Consider the following 1662-residue polypeptide: Cortactin-binding protein 2 (1662 aa).

4 disordered regions span residues methionine 1–alanine 23, lysine 202–threonine 235, isoleucine 365–glycine 439, and glycine 453–serine 477. Positions arginine 118 to lysine 275 form a coiled coil. Residues proline 385–serine 395 show a composition bias toward low complexity. Residues alanine 404 to alanine 421 show a composition bias toward polar residues. Residue arginine 497 is modified to Asymmetric dimethylarginine. The disordered stretch occupies residues phenylalanine 498–serine 615. Composition is skewed to polar residues over residues aspartate 516–lysine 529 and threonine 582–glutamine 592. 5 ANK repeats span residues glycine 708–tyrosine 738, aspartate 742–alanine 771, asparagine 775–histidine 804, glycine 808–valine 837, and aspartate 841–glycine 870. Positions asparagine 871 to lysine 897 are disordered. Positions serine 874–serine 891 are enriched in acidic residues. The ANK 6 repeat unit spans residues glutamate 911–arginine 941. The disordered stretch occupies residues lysine 1446–tryptophan 1473. The residue at position 1523 (serine 1523) is a Phosphoserine. The tract at residues valine 1614–lysine 1662 is disordered. A compositionally biased stretch (low complexity) spans serine 1623–glutamine 1637. A compositionally biased stretch (basic and acidic residues) spans serine 1644 to lysine 1662.

As to quaternary structure, interacts with CTTN/cortactin SH3 domain. Interacts with STRN, STRN4/zinedin and MOB4/phocein; this interactions mediate the association with the STRIPAK core complex and may regulate dendritic spine distribution of the STRIPAK complex in hippocampal neurons. Activation of glutamate receptors weakens the interaction with STRN and STRN4.

Its subcellular location is the cytoplasm. The protein resides in the cell cortex. The protein localises to the cell projection. It localises to the dendritic spine. In terms of biological role, regulates the dendritic spine distribution of CTTN/cortactin in hippocampal neurons, and thus controls dendritic spinogenesis and dendritic spine maintenance. Associates with the striatin-interacting phosphatase and kinase (STRIPAK) core complex to regulate dendritic spine distribution of the STRIPAK complex in hippocampal neurons. This Callithrix jacchus (White-tufted-ear marmoset) protein is Cortactin-binding protein 2 (CTTNBP2).